A 118-amino-acid chain; its full sequence is Putative pterin-4-alpha-carbinolamine dehydratase (118 aa).

The protein belongs to the pterin-4-alpha-carbinolamine dehydratase family.

It catalyses the reaction (4aS,6R)-4a-hydroxy-L-erythro-5,6,7,8-tetrahydrobiopterin = (6R)-L-erythro-6,7-dihydrobiopterin + H2O. This chain is Putative pterin-4-alpha-carbinolamine dehydratase, found in Pseudomonas aeruginosa (strain LESB58).